The primary structure comprises 314 residues: Methionyl-tRNA formyltransferase (314 aa).

Position 113–116 (113–116) interacts with (6S)-5,6,7,8-tetrahydrofolate; it reads SLLP.

It belongs to the Fmt family.

The catalysed reaction is L-methionyl-tRNA(fMet) + (6R)-10-formyltetrahydrofolate = N-formyl-L-methionyl-tRNA(fMet) + (6S)-5,6,7,8-tetrahydrofolate + H(+). Functionally, attaches a formyl group to the free amino group of methionyl-tRNA(fMet). The formyl group appears to play a dual role in the initiator identity of N-formylmethionyl-tRNA by promoting its recognition by IF2 and preventing the misappropriation of this tRNA by the elongation apparatus. This Serratia proteamaculans (strain 568) protein is Methionyl-tRNA formyltransferase.